The sequence spans 101 residues: UPF0134 protein MPN_675 (101 aa).

Belongs to the UPF0134 family.

The sequence is that of UPF0134 protein MPN_675 from Mycoplasma pneumoniae (strain ATCC 29342 / M129 / Subtype 1) (Mycoplasmoides pneumoniae).